A 366-amino-acid chain; its full sequence is Carboxy-cis,cis-muconate cyclase (366 aa).

Active-site residues include H149, R197, E213, and R275.

This sequence belongs to the cycloisomerase 2 family. As to quaternary structure, homotetramer.

It catalyses the reaction 3-carboxy-2,5-dihydro-5-oxofuran-2-acetate = 3-carboxy-cis,cis-muconate. It functions in the pathway aromatic compound metabolism; beta-ketoadipate pathway; 3-carboxy-cis,cis-muconate from 3-carboxy-2,5-dihydro-5-oxofuran-2-acetate: step 1/1. In terms of biological role, catalyzes a syn cycloisomerization. Also possesses mle activity. This chain is Carboxy-cis,cis-muconate cyclase, found in Neurospora crassa (strain ATCC 24698 / 74-OR23-1A / CBS 708.71 / DSM 1257 / FGSC 987).